We begin with the raw amino-acid sequence, 102 residues long: MAKQKIRIRLKAYDHRLLDASAKKIVEAVKMTNAKVSGPIPLPTERTLYTVLTSPHKYKDAREQFEKLVHKRLIEIIDPTPKTIDSLMKVDLPAGVDVEIKL.

Belongs to the universal ribosomal protein uS10 family. As to quaternary structure, part of the 30S ribosomal subunit.

Its function is as follows. Involved in the binding of tRNA to the ribosomes. The protein is Small ribosomal subunit protein uS10 of Kosmotoga olearia (strain ATCC BAA-1733 / DSM 21960 / TBF 19.5.1).